A 124-amino-acid chain; its full sequence is Small ribosomal subunit protein uS12 (124 aa).

Positions 1–28 (MPTIQQLIRTERQSSKAKTKSPALKSCP) are disordered. A 3-methylthioaspartic acid modification is found at D89. The disordered stretch occupies residues 104–124 (TAGVKDRRQSRSKYGAKTPKE).

It belongs to the universal ribosomal protein uS12 family. Part of the 30S ribosomal subunit. Contacts proteins S8 and S17. May interact with IF1 in the 30S initiation complex.

With S4 and S5 plays an important role in translational accuracy. Its function is as follows. Interacts with and stabilizes bases of the 16S rRNA that are involved in tRNA selection in the A site and with the mRNA backbone. Located at the interface of the 30S and 50S subunits, it traverses the body of the 30S subunit contacting proteins on the other side and probably holding the rRNA structure together. The combined cluster of proteins S8, S12 and S17 appears to hold together the shoulder and platform of the 30S subunit. This chain is Small ribosomal subunit protein uS12, found in Synechococcus sp. (strain WH7803).